The following is a 222-amino-acid chain: MKKAVVILSGGMDSTTAAFIAKSEGYEIIPVHFNYSQRTEKRELKAFNDICDYLNLDNRYIIDIPFFKQIGASALVDENIDVPVDGVKPGIPVTYVPFRNGIFLSIAAAVAEKEGAEAIYIGVVEEDSSGYPDCTEDFIQNMQKAVNSGTKPETNIEIKTPLVHLKKEDIVKTAVKYNVPLHLTWSCYKNEDEACGVCDSCRLRLKGFEKAGIEDRIPYKQK.

8–18 lines the ATP pocket; sequence LSGGMDSTTAA. 4 residues coordinate Zn(2+): cysteine 187, cysteine 195, cysteine 198, and cysteine 201.

It belongs to the QueC family. The cofactor is Zn(2+).

It carries out the reaction 7-carboxy-7-deazaguanine + NH4(+) + ATP = 7-cyano-7-deazaguanine + ADP + phosphate + H2O + H(+). It functions in the pathway purine metabolism; 7-cyano-7-deazaguanine biosynthesis. Its function is as follows. Catalyzes the ATP-dependent conversion of 7-carboxy-7-deazaguanine (CDG) to 7-cyano-7-deazaguanine (preQ(0)). This chain is 7-cyano-7-deazaguanine synthase, found in Nautilia profundicola (strain ATCC BAA-1463 / DSM 18972 / AmH).